Reading from the N-terminus, the 214-residue chain is MIKRFIVFGPPGVGKGTLASLVSQKYGFEHISTGNIFRSQIASNSELGIKLKEIVESGGYVPDSITNEIVKKTLADLEKEQKSYILDGYPRTLNQIEFLFSLNKAQEYSVWFLEAPSEIILKRLSGRRICPSCNAQYHIYFKKSKLDTKCEIDQSELIQRKDDQESSIIKRLEIYEKQTNSLKKYFKELGILVEIDASKDREEILKELEQKVSL.

12 to 17 (GVGKGT) serves as a coordination point for ATP. The tract at residues 32–61 (STGNIFRSQIASNSELGIKLKEIVESGGYV) is NMP. AMP is bound by residues Thr33, Arg38, 59–61 (GYV), 88–91 (GYPR), and Gln95. Residues 126–163 (GRRICPSCNAQYHIYFKKSKLDTKCEIDQSELIQRKDD) form an LID region. Arg127 contributes to the ATP binding site. Zn(2+)-binding residues include Cys130, Cys133, Cys150, and Asp153. AMP-binding residues include Arg160 and Arg171. Residue Lys199 coordinates ATP.

It belongs to the adenylate kinase family. In terms of assembly, monomer.

Its subcellular location is the cytoplasm. It catalyses the reaction AMP + ATP = 2 ADP. It participates in purine metabolism; AMP biosynthesis via salvage pathway; AMP from ADP: step 1/1. In terms of biological role, catalyzes the reversible transfer of the terminal phosphate group between ATP and AMP. Plays an important role in cellular energy homeostasis and in adenine nucleotide metabolism. This is Adenylate kinase from Mycoplasmopsis pulmonis (strain UAB CTIP) (Mycoplasma pulmonis).